Here is a 180-residue protein sequence, read N- to C-terminus: Thebaine synthase 1 (180 aa).

S96 is a thebaine binding site. The Proton acceptor role is filled by H111. T127 is a binding site for thebaine.

It belongs to the MLP family. As to quaternary structure, homodimer (allosteric) and oligomers. Expressed in poppy latex.

The enzyme catalyses (7S)-O-acetylsalutaridinol = thebaine + acetate + H(+). Its pathway is alkaloid biosynthesis; morphine biosynthesis. Catalyzes the formation of thebaine from (7S)-salutaridinol 7-O-acetate at the expense of labile hydroxylated by-products, which are preferentially produced by spontaneous allylic elimination. In Papaver somniferum (Opium poppy), this protein is Thebaine synthase 1.